The primary structure comprises 557 residues: Dihydroxy-acid dehydratase (557 aa).

Residue cysteine 50 coordinates [2Fe-2S] cluster. Aspartate 82 contacts Mg(2+). Cysteine 123 serves as a coordination point for [2Fe-2S] cluster. Aspartate 124 and lysine 125 together coordinate Mg(2+). N6-carboxylysine is present on lysine 125. [2Fe-2S] cluster is bound at residue cysteine 195. Position 447 (glutamate 447) interacts with Mg(2+). Serine 473 (proton acceptor) is an active-site residue.

It belongs to the IlvD/Edd family. As to quaternary structure, homodimer. [2Fe-2S] cluster serves as cofactor. It depends on Mg(2+) as a cofactor.

It catalyses the reaction (2R)-2,3-dihydroxy-3-methylbutanoate = 3-methyl-2-oxobutanoate + H2O. The enzyme catalyses (2R,3R)-2,3-dihydroxy-3-methylpentanoate = (S)-3-methyl-2-oxopentanoate + H2O. The protein operates within amino-acid biosynthesis; L-isoleucine biosynthesis; L-isoleucine from 2-oxobutanoate: step 3/4. Its pathway is amino-acid biosynthesis; L-valine biosynthesis; L-valine from pyruvate: step 3/4. Functionally, functions in the biosynthesis of branched-chain amino acids. Catalyzes the dehydration of (2R,3R)-2,3-dihydroxy-3-methylpentanoate (2,3-dihydroxy-3-methylvalerate) into 2-oxo-3-methylpentanoate (2-oxo-3-methylvalerate) and of (2R)-2,3-dihydroxy-3-methylbutanoate (2,3-dihydroxyisovalerate) into 2-oxo-3-methylbutanoate (2-oxoisovalerate), the penultimate precursor to L-isoleucine and L-valine, respectively. This chain is Dihydroxy-acid dehydratase, found in Herminiimonas arsenicoxydans.